The sequence spans 182 residues: Glycoprotein Q2 (182 aa).

Positions 1-20 (MHFVAVYILTHFHAYPGVAA) are cleaved as a signal peptide. Residues asparagine 74 and asparagine 110 are each glycosylated (N-linked (GlcNAc...) asparagine; by host).

As to quaternary structure, interacts with isoform gQ2. The heterodimer gQ1-gQ2 associates with the glycoprotein complex gH-gL to form a tetrameric complex. The gH/gL/gQ1/gQ2 complex binds to host TNFRSF4. In terms of processing, glycosylated by host.

The protein localises to the virion membrane. It localises to the host endoplasmic reticulum-Golgi intermediate compartment. Plays a role in virus entry by participating in host receptor binding at the cell surface. The polypeptide is Glycoprotein Q2 (Human herpesvirus 6B (strain Z29) (HHV-6 variant B)).